The sequence spans 943 residues: Isoleucine--tRNA ligase (943 aa).

Positions 59–69 (PYANGQIHLGH) match the 'HIGH' region motif. E577 contacts L-isoleucyl-5'-AMP. Positions 618–622 (KMSKS) match the 'KMSKS' region motif. ATP is bound at residue K621. Zn(2+) is bound by residues C906, C909, C926, and C929.

The protein belongs to the class-I aminoacyl-tRNA synthetase family. IleS type 1 subfamily. As to quaternary structure, monomer. Zn(2+) serves as cofactor.

The protein resides in the cytoplasm. The enzyme catalyses tRNA(Ile) + L-isoleucine + ATP = L-isoleucyl-tRNA(Ile) + AMP + diphosphate. Catalyzes the attachment of isoleucine to tRNA(Ile). As IleRS can inadvertently accommodate and process structurally similar amino acids such as valine, to avoid such errors it has two additional distinct tRNA(Ile)-dependent editing activities. One activity is designated as 'pretransfer' editing and involves the hydrolysis of activated Val-AMP. The other activity is designated 'posttransfer' editing and involves deacylation of mischarged Val-tRNA(Ile). This chain is Isoleucine--tRNA ligase, found in Xanthomonas axonopodis pv. citri (strain 306).